We begin with the raw amino-acid sequence, 873 residues long: Kinase suppressor of Ras 1 (873 aa).

Disordered stretches follow at residues 1–24 (MDRA…GAAA), 174–230 (EHKM…PGLS), and 251–281 (LHSF…PSRK). The segment at 1-170 (MDRAALRAAA…ALTCLRKVTG (170 aa)) is mediates association with membranes. A compositionally biased stretch (polar residues) spans 206–216 (ASTQGPRSISV). A phosphothreonine mark is found at threonine 256 and threonine 260. Serine 297 is modified (phosphoserine; by MARK3). The residue at position 320 (serine 320) is a Phosphoserine. A Phorbol-ester/DAG-type zinc finger spans residues 333–377 (THRFSTKSWLSQVCNVCQKSMIFGVKCKHCRLKCHNKCTKEAPAC). Zn(2+) is bound at residue histidine 334. Residue serine 337 is modified to Phosphoserine. Cysteine 346, cysteine 349, cysteine 359, cysteine 362, histidine 367, cysteine 370, and cysteine 377 together coordinate Zn(2+). Position 392 is a phosphoserine; by MARK3 (serine 392). Threonine 411 is modified (phosphothreonine). Disordered regions lie at residues 416–473 (LTKK…RFSF) and 506–544 (HEAE…PISR). Low complexity predominate over residues 429-458 (SSSNPSSTTSSTPSSPAPFLTSSNPSSATT). Positions 506 to 519 (HEAEAEEPEAGKSE) are enriched in basic and acidic residues. Serine 518 carries the phosphoserine modification. Acidic residues predominate over residues 520-530 (AEDDEEDEVDD). Positions 563 to 833 (VELGEPIGQG…MDMLERLPKL (271 aa)) constitute a Protein kinase domain. 569–577 (IGQGRWGRV) lines the ATP pocket. Residue aspartate 683 is the Proton acceptor of the active site. Lysine 685 and aspartate 700 together coordinate ATP. The residue at position 838 (serine 838) is a Phosphoserine.

The protein belongs to the protein kinase superfamily. TKL Ser/Thr protein kinase family. In terms of assembly, homodimer. Heterodimerizes (via N-terminus) with BRAF (via N-terminus) in a MAP2K1/MEK1 or MAP2K2/MEK2-dependent manner. Interacts with MAP2K1/MEK1 and MAP2K2/MEK2. Binding to MAP2K1/MEK1 releases the intramolecular inhibitory interaction between KSR1 N-terminus and kinase domains which is required for the subsequent RSK1 dimerization with BRAF. Identified in a complex with AKAP13, MAP2K1 and BRAF. Interacts with AKAP13 and BRAF. Interacts with RAF and MAPK/ERK, in a Ras-dependent manner. Interacts with 14-3-3 proteins including YWHAB. Interacts with HSP90AA1/HSP90, YWHAE/14-3-3 and CDC37. The binding of 14-3-3 proteins to phosphorylated KSR1 prevents the membrane localization. Interacts with MARK3/C-TAK1. Interacts with PPP2R1A and PPP2CA. Interacts with VRK2. Post-translationally, phosphorylated on Ser-297 and, to a higher extent, on Ser-392 by MARK3. Dephosphorylated on Ser-392 by PPP2CA. Phosphorylated KSR1 is cytoplasmic and dephosphorylated KSR1 is membrane-associated. Phosphorylated by PKA at Ser-838. Phosphorylation at Ser-838 is required for cAMP-dependent activation of MAPK1 and/or MAPK3. Expressed in brain, spleen and testis. Isoform 1 is highly expressed spleen and weakly in testis, and isoform 2 is highly expressed in brain and weakly in testis.

It is found in the cytoplasm. It localises to the membrane. Its subcellular location is the cell membrane. The protein resides in the cell projection. The protein localises to the ruffle membrane. It is found in the endoplasmic reticulum membrane. The catalysed reaction is L-seryl-[protein] + ATP = O-phospho-L-seryl-[protein] + ADP + H(+). It carries out the reaction L-threonyl-[protein] + ATP = O-phospho-L-threonyl-[protein] + ADP + H(+). In terms of biological role, part of a multiprotein signaling complex which promotes phosphorylation of Raf family members and activation of downstream MAP kinases. Independently of its kinase activity, acts as MAP2K1/MEK1 and MAP2K2/MEK2-dependent allosteric activator of BRAF; upon binding to MAP2K1/MEK1 or MAP2K2/MEK2, dimerizes with BRAF and promotes BRAF-mediated phosphorylation of MAP2K1/MEK1 and/or MAP2K2/MEK2. Promotes activation of MAPK1 and/or MAPK3, both in response to EGF and to cAMP. Its kinase activity is unsure. Some protein kinase activity has been detected in vitro, however the physiological relevance of this activity is unknown. The chain is Kinase suppressor of Ras 1 (Ksr1) from Mus musculus (Mouse).